Reading from the N-terminus, the 161-residue chain is uncharacterized protein (161 aa).

The protein belongs to the M.jannaschii MJ0150/MJ0739/MJ0745/MJ1460/MJ1642 family.

This is an uncharacterized protein from Methanocaldococcus jannaschii (strain ATCC 43067 / DSM 2661 / JAL-1 / JCM 10045 / NBRC 100440) (Methanococcus jannaschii).